Here is a 293-residue protein sequence, read N- to C-terminus: MAWVQIRLNSTDKQAEQISDFLEEIGAVSVTFMDSQDTPIFEPLPGETRLWGNTDVVGLFDAETDMKAIVEALIASRLVEADFAHKIEQIEDKDWEREWMDNFHPMQFGKRLWICPSWREVPDPNAVNVMLDPGLAFGTGTHPTTALCLQWLDSLDLTGKTVIDFGCGSGILAIAALKLGAKQAIGIDIDPQAILASGNNAEANGVADRLQLFLAKDQPQDLQADVVVANILAGPLKELAPNIITLVKPQGDLGLSGILATQAESVCEAYAPDFNLDPVVEKEEWCRITGVKK.

The S-adenosyl-L-methionine site is built by threonine 145, glycine 166, aspartate 188, and asparagine 230.

The protein belongs to the methyltransferase superfamily. PrmA family.

The protein resides in the cytoplasm. The catalysed reaction is L-lysyl-[protein] + 3 S-adenosyl-L-methionine = N(6),N(6),N(6)-trimethyl-L-lysyl-[protein] + 3 S-adenosyl-L-homocysteine + 3 H(+). Methylates ribosomal protein L11. This chain is Ribosomal protein L11 methyltransferase, found in Actinobacillus pleuropneumoniae serotype 5b (strain L20).